Here is a 240-residue protein sequence, read N- to C-terminus: Ubiquinone biosynthesis O-methyltransferase (240 aa).

Residues Arg44, Gly64, Asp85, and Met129 each coordinate S-adenosyl-L-methionine.

The protein belongs to the methyltransferase superfamily. UbiG/COQ3 family.

The catalysed reaction is a 3-demethylubiquinol + S-adenosyl-L-methionine = a ubiquinol + S-adenosyl-L-homocysteine + H(+). It carries out the reaction a 3-(all-trans-polyprenyl)benzene-1,2-diol + S-adenosyl-L-methionine = a 2-methoxy-6-(all-trans-polyprenyl)phenol + S-adenosyl-L-homocysteine + H(+). Its pathway is cofactor biosynthesis; ubiquinone biosynthesis. Functionally, O-methyltransferase that catalyzes the 2 O-methylation steps in the ubiquinone biosynthetic pathway. In Shigella flexneri serotype 5b (strain 8401), this protein is Ubiquinone biosynthesis O-methyltransferase.